A 198-amino-acid polypeptide reads, in one-letter code: ATP-dependent Clp protease proteolytic subunit (198 aa).

The active-site Nucleophile is the Ser103. His128 is an active-site residue.

The protein belongs to the peptidase S14 family. As to quaternary structure, fourteen ClpP subunits assemble into 2 heptameric rings which stack back to back to give a disk-like structure with a central cavity, resembling the structure of eukaryotic proteasomes.

The protein localises to the cytoplasm. It catalyses the reaction Hydrolysis of proteins to small peptides in the presence of ATP and magnesium. alpha-casein is the usual test substrate. In the absence of ATP, only oligopeptides shorter than five residues are hydrolyzed (such as succinyl-Leu-Tyr-|-NHMec, and Leu-Tyr-Leu-|-Tyr-Trp, in which cleavage of the -Tyr-|-Leu- and -Tyr-|-Trp bonds also occurs).. Functionally, cleaves peptides in various proteins in a process that requires ATP hydrolysis. Has a chymotrypsin-like activity. Plays a major role in the degradation of misfolded proteins. The protein is ATP-dependent Clp protease proteolytic subunit of Vesicomyosocius okutanii subsp. Calyptogena okutanii (strain HA).